The following is a 252-amino-acid chain: 2-succinyl-6-hydroxy-2,4-cyclohexadiene-1-carboxylate synthase (252 aa).

This sequence belongs to the AB hydrolase superfamily. MenH family. In terms of assembly, monomer.

It catalyses the reaction 5-enolpyruvoyl-6-hydroxy-2-succinyl-cyclohex-3-ene-1-carboxylate = (1R,6R)-6-hydroxy-2-succinyl-cyclohexa-2,4-diene-1-carboxylate + pyruvate. The protein operates within quinol/quinone metabolism; 1,4-dihydroxy-2-naphthoate biosynthesis; 1,4-dihydroxy-2-naphthoate from chorismate: step 3/7. It functions in the pathway quinol/quinone metabolism; menaquinone biosynthesis. Its function is as follows. Catalyzes a proton abstraction reaction that results in 2,5-elimination of pyruvate from 2-succinyl-5-enolpyruvyl-6-hydroxy-3-cyclohexene-1-carboxylate (SEPHCHC) and the formation of 2-succinyl-6-hydroxy-2,4-cyclohexadiene-1-carboxylate (SHCHC). The chain is 2-succinyl-6-hydroxy-2,4-cyclohexadiene-1-carboxylate synthase from Escherichia coli O8 (strain IAI1).